The following is a 347-amino-acid chain: Holliday junction branch migration complex subunit RuvB (347 aa).

Residues 1 to 183 (MSDERVVTPR…FGSVHRLEFY (183 aa)) form a large ATPase domain (RuvB-L) region. Residues leucine 22, arginine 23, glycine 64, lysine 67, threonine 68, serine 69, 130–132 (EDF), arginine 173, tyrosine 183, and arginine 220 each bind ATP. Threonine 68 is a Mg(2+) binding site. The small ATPAse domain (RuvB-S) stretch occupies residues 184-254 (SVDALYEIVM…VARDALAKLE (71 aa)). The head domain (RuvB-H) stretch occupies residues 257-347 (HLGLDENDRR…NGAEQGRLWT (91 aa)). The DNA site is built by arginine 312 and arginine 317.

It belongs to the RuvB family. In terms of assembly, homohexamer. Forms an RuvA(8)-RuvB(12)-Holliday junction (HJ) complex. HJ DNA is sandwiched between 2 RuvA tetramers; dsDNA enters through RuvA and exits via RuvB. An RuvB hexamer assembles on each DNA strand where it exits the tetramer. Each RuvB hexamer is contacted by two RuvA subunits (via domain III) on 2 adjacent RuvB subunits; this complex drives branch migration. In the full resolvosome a probable DNA-RuvA(4)-RuvB(12)-RuvC(2) complex forms which resolves the HJ.

It localises to the cytoplasm. The catalysed reaction is ATP + H2O = ADP + phosphate + H(+). In terms of biological role, the RuvA-RuvB-RuvC complex processes Holliday junction (HJ) DNA during genetic recombination and DNA repair, while the RuvA-RuvB complex plays an important role in the rescue of blocked DNA replication forks via replication fork reversal (RFR). RuvA specifically binds to HJ cruciform DNA, conferring on it an open structure. The RuvB hexamer acts as an ATP-dependent pump, pulling dsDNA into and through the RuvAB complex. RuvB forms 2 homohexamers on either side of HJ DNA bound by 1 or 2 RuvA tetramers; 4 subunits per hexamer contact DNA at a time. Coordinated motions by a converter formed by DNA-disengaged RuvB subunits stimulates ATP hydrolysis and nucleotide exchange. Immobilization of the converter enables RuvB to convert the ATP-contained energy into a lever motion, pulling 2 nucleotides of DNA out of the RuvA tetramer per ATP hydrolyzed, thus driving DNA branch migration. The RuvB motors rotate together with the DNA substrate, which together with the progressing nucleotide cycle form the mechanistic basis for DNA recombination by continuous HJ branch migration. Branch migration allows RuvC to scan DNA until it finds its consensus sequence, where it cleaves and resolves cruciform DNA. This chain is Holliday junction branch migration complex subunit RuvB, found in Roseiflexus castenholzii (strain DSM 13941 / HLO8).